Here is a 1109-residue protein sequence, read N- to C-terminus: Protein argonaute 3 (1109 aa).

Over residues 1 to 13 (MAGRGGRDPRRGY) the composition is skewed to basic and acidic residues. Disordered regions lie at residues 1–83 (MAGR…GLVR) and 125–220 (DHRD…PLSK). Composition is skewed to gly residues over residues 14–30 (DGGYGYPRGGGGQGGTN), 37–54 (RGGGRNGPRGGRFPGGRG), and 62–83 (DVLGGGQGGGRGTTAGAGGLVR). Basic and acidic residues predominate over residues 125-134 (DHRDQHDHQS). A compositionally biased stretch (basic residues) spans 135–161 (QRHHHRHHHHQRQRHHHHHQRQQRRGS). In terms of domain architecture, PAZ spans 411–521 (SVLDLVKTMK…VPIEFCNIPE (111 aa)). The span at 527 to 545 (VARLDDKKSDNKGEQEKPS) shows a compositional bias: basic and acidic residues. The segment at 527–548 (VARLDDKKSDNKGEQEKPSTKT) is disordered. The 304-residue stretch at 720 to 1023 (LLFCPMLNRC…AAYRGRLYYE (304 aa)) folds into the Piwi domain.

Belongs to the argonaute family. Ago subfamily.

Functionally, probably involved in the RNA silencing pathway. May bind to short RNAs such as microRNAs (miRNAs) or short interfering RNAs (siRNAs), and represses the translation of mRNAs which are complementary to them. This Oryza sativa subsp. japonica (Rice) protein is Protein argonaute 3 (AGO3).